The following is a 647-amino-acid chain: DNA mismatch repair protein MutL (647 aa).

This sequence belongs to the DNA mismatch repair MutL/HexB family.

This protein is involved in the repair of mismatches in DNA. It is required for dam-dependent methyl-directed DNA mismatch repair. May act as a 'molecular matchmaker', a protein that promotes the formation of a stable complex between two or more DNA-binding proteins in an ATP-dependent manner without itself being part of a final effector complex. This is DNA mismatch repair protein MutL from Bacillus cereus (strain Q1).